We begin with the raw amino-acid sequence, 248 residues long: Small ribosomal subunit protein uS3 (248 aa).

Residues 39–107 (IRQMLLKQLK…EVFINIVEIR (69 aa)) form the KH type-2 domain. A disordered region spans residues 214-248 (AVDKRMTAESEGPSSGRPPRRDRDRDRDRDRDSAA). A compositionally biased stretch (basic and acidic residues) spans 232–248 (PRRDRDRDRDRDRDSAA).

Belongs to the universal ribosomal protein uS3 family. As to quaternary structure, part of the 30S ribosomal subunit. Forms a tight complex with proteins S10 and S14.

In terms of biological role, binds the lower part of the 30S subunit head. Binds mRNA in the 70S ribosome, positioning it for translation. This is Small ribosomal subunit protein uS3 from Azorhizobium caulinodans (strain ATCC 43989 / DSM 5975 / JCM 20966 / LMG 6465 / NBRC 14845 / NCIMB 13405 / ORS 571).